We begin with the raw amino-acid sequence, 354 residues long: MNGTEGPMFYVPMSNATGVVKSPYDYPQYYLVAPWAYGCLAAYMFFLIITGFPINFLTLYVTIEHKKLRTPLNYILLNLAISDLFMVFGGFTTTMYTSLHGYFVFGRIGCNLEGFFATLGGEMGLWSLVVLAFERWMVVCKPVSNFRFGENHAIMGVVFTWFMACTCAVPPLVGWSRYIPEGMQCSCGVDYYTRAPGYNNESFVIYMFLVHFIIPLIVIFFCYGRLVCTVKDAAAQQQESETTQRAEREVTRMVVIMVIGFLICWIPYASVAWYIFTHQGSEFGPVFMTVPAFFAKSAAVYNPCIYICMNKQFRHCMITTLCCGKNPFEEEEGASTTASKTEASSVSSSSVSPA.

Residues 1–36 (MNGTEGPMFYVPMSNATGVVKSPYDYPQYYLVAPWA) lie on the Extracellular side of the membrane. Residues N2 and N15 are each glycosylated (N-linked (GlcNAc...) asparagine). Residues 37 to 61 (YGCLAAYMFFLIITGFPINFLTLYV) form a helical membrane-spanning segment. At 62-73 (TIEHKKLRTPLN) the chain is on the cytoplasmic side. The chain crosses the membrane as a helical span at residues 74–96 (YILLNLAISDLFMVFGGFTTTMY). The Extracellular segment spans residues 97–110 (TSLHGYFVFGRIGC). A disulfide bridge links C110 with C187. The helical transmembrane segment at 111–133 (NLEGFFATLGGEMGLWSLVVLAF) threads the bilayer. A 'Ionic lock' involved in activated form stabilization motif is present at residues 134–136 (ERW). Residues 134-152 (ERWMVVCKPVSNFRFGENH) lie on the Cytoplasmic side of the membrane. A helical transmembrane segment spans residues 153–173 (AIMGVVFTWFMACTCAVPPLV). Over 174–202 (GWSRYIPEGMQCSCGVDYYTRAPGYNNES) the chain is Extracellular. A helical membrane pass occupies residues 203–224 (FVIYMFLVHFIIPLIVIFFCYG). Topologically, residues 225–252 (RLVCTVKDAAAQQQESETTQRAEREVTR) are cytoplasmic. The helical transmembrane segment at 253-274 (MVVIMVIGFLICWIPYASVAWY) threads the bilayer. Over 275–286 (IFTHQGSEFGPV) the chain is Extracellular. Residues 287–308 (FMTVPAFFAKSAAVYNPCIYIC) form a helical membrane-spanning segment. K296 bears the N6-(retinylidene)lysine mark. The Cytoplasmic segment spans residues 309–354 (MNKQFRHCMITTLCCGKNPFEEEEGASTTASKTEASSVSSSSVSPA). S-palmitoyl cysteine attachment occurs at residues C322 and C323. The tract at residues 333–354 (GASTTASKTEASSVSSSSVSPA) is disordered. Over residues 334 to 354 (ASTTASKTEASSVSSSSVSPA) the composition is skewed to low complexity.

Belongs to the G-protein coupled receptor 1 family. Opsin subfamily. Phosphorylated on some or all of the serine and threonine residues present in the C-terminal region. Post-translationally, contains one covalently linked retinal chromophore.

Its subcellular location is the membrane. The protein resides in the cell projection. It is found in the cilium. It localises to the photoreceptor outer segment. Functionally, photoreceptor required for image-forming vision at low light intensity. While most salt water fish species use retinal as chromophore, most freshwater fish use 3-dehydroretinal, or a mixture of retinal and 3-dehydroretinal. Light-induced isomerization of 11-cis to all-trans retinal triggers a conformational change that activates signaling via G-proteins. Subsequent receptor phosphorylation mediates displacement of the bound G-protein alpha subunit by arrestin and terminates signaling. This is Rhodopsin (rho) from Cyprinus carpio (Common carp).